The sequence spans 261 residues: Cytochrome c oxidase subunit 3 (261 aa).

The Mitochondrial matrix segment spans residues Met-1 to Pro-15. The helical transmembrane segment at Trp-16–Trp-34 threads the bilayer. Residues Phe-35–Met-40 lie on the Mitochondrial intermembrane side of the membrane. A helical transmembrane segment spans residues Thr-41 to Thr-66. At Phe-67–Thr-72 the chain is on the mitochondrial matrix side. The helical transmembrane segment at Ser-73–Ser-105 threads the bilayer. At Leu-106 to Glu-128 the chain is on the mitochondrial intermembrane side. Residues Val-129 to Met-152 traverse the membrane as a helical segment. At Glu-153–Asn-155 the chain is on the mitochondrial matrix side. Residues Arg-156–Glu-183 traverse the membrane as a helical segment. Topologically, residues Ala-184–Asp-190 are mitochondrial intermembrane. The helical transmembrane segment at Gly-191–Leu-223 threads the bilayer. Residues Lys-224 to His-232 are Mitochondrial matrix-facing. The helical transmembrane segment at Phe-233–Ile-256 threads the bilayer. Residues Tyr-257 to Ser-261 lie on the Mitochondrial intermembrane side of the membrane.

Belongs to the cytochrome c oxidase subunit 3 family. Component of the cytochrome c oxidase (complex IV, CIV), a multisubunit enzyme composed of 14 subunits. The complex is composed of a catalytic core of 3 subunits MT-CO1, MT-CO2 and MT-CO3, encoded in the mitochondrial DNA, and 11 supernumerary subunits COX4I, COX5A, COX5B, COX6A, COX6B, COX6C, COX7A, COX7B, COX7C, COX8 and NDUFA4, which are encoded in the nuclear genome. The complex exists as a monomer or a dimer and forms supercomplexes (SCs) in the inner mitochondrial membrane with NADH-ubiquinone oxidoreductase (complex I, CI) and ubiquinol-cytochrome c oxidoreductase (cytochrome b-c1 complex, complex III, CIII), resulting in different assemblies (supercomplex SCI(1)III(2)IV(1) and megacomplex MCI(2)III(2)IV(2)).

Its subcellular location is the mitochondrion inner membrane. It catalyses the reaction 4 Fe(II)-[cytochrome c] + O2 + 8 H(+)(in) = 4 Fe(III)-[cytochrome c] + 2 H2O + 4 H(+)(out). Component of the cytochrome c oxidase, the last enzyme in the mitochondrial electron transport chain which drives oxidative phosphorylation. The respiratory chain contains 3 multisubunit complexes succinate dehydrogenase (complex II, CII), ubiquinol-cytochrome c oxidoreductase (cytochrome b-c1 complex, complex III, CIII) and cytochrome c oxidase (complex IV, CIV), that cooperate to transfer electrons derived from NADH and succinate to molecular oxygen, creating an electrochemical gradient over the inner membrane that drives transmembrane transport and the ATP synthase. Cytochrome c oxidase is the component of the respiratory chain that catalyzes the reduction of oxygen to water. Electrons originating from reduced cytochrome c in the intermembrane space (IMS) are transferred via the dinuclear copper A center (CU(A)) of subunit 2 and heme A of subunit 1 to the active site in subunit 1, a binuclear center (BNC) formed by heme A3 and copper B (CU(B)). The BNC reduces molecular oxygen to 2 water molecules using 4 electrons from cytochrome c in the IMS and 4 protons from the mitochondrial matrix. The protein is Cytochrome c oxidase subunit 3 (MT-CO3) of Damaliscus lunatus (Tsessebe).